Here is a 74-residue protein sequence, read N- to C-terminus: Small ribosomal subunit protein bS18 (74 aa).

This sequence belongs to the bacterial ribosomal protein bS18 family. Part of the 30S ribosomal subunit. Forms a tight heterodimer with protein bS6.

Functionally, binds as a heterodimer with protein bS6 to the central domain of the 16S rRNA, where it helps stabilize the platform of the 30S subunit. This Chlorobaculum tepidum (strain ATCC 49652 / DSM 12025 / NBRC 103806 / TLS) (Chlorobium tepidum) protein is Small ribosomal subunit protein bS18.